Consider the following 388-residue polypeptide: Oxytocin receptor (388 aa).

The interval 1–32 (MEGTPAANWSVELDLGSGVPPGEEGNRTAGPP) is disordered. Topologically, residues 1–38 (MEGTPAANWSVELDLGSGVPPGEEGNRTAGPPQRNEAL) are extracellular. N-linked (GlcNAc...) asparagine glycans are attached at residues N8 and N26. A helical membrane pass occupies residues 39–63 (ARVEVAVLCLILFLALSGNACVLLA). At 64–74 (LRTTRHKHSRL) the chain is on the cytoplasmic side. A helical transmembrane segment spans residues 75–97 (FFFMKHLSIADLVVAVFQVLPQL). At 98–113 (LWDITFRFYGPDLLCR) the chain is on the extracellular side. C112 and C187 are joined by a disulfide. A helical transmembrane segment spans residues 114–135 (LVKYLQVVGMFASTYLLLLMSL). The Cytoplasmic segment spans residues 136-154 (DRCLAICQPLRSLRRRTDR). The helical transmembrane segment at 155 to 175 (LAVLGTWLGCLVASAPQVHIF) threads the bilayer. The Extracellular segment spans residues 176–202 (SLREVADGVFDCWAVFIQPWGPKAYVT). A helical transmembrane segment spans residues 203–225 (WITLAVYIVPVIVLAACYGLISF). Over 226–274 (KIWQNLRLKTAAAAAAAEGNDAAGGAGRAALARVSSVKLISKAKIRTVK) the chain is Cytoplasmic. Residues 275-293 (MTFIIVLAFIVCWTPFFFV) form a helical membrane-spanning segment. Residues 294–308 (QMWSVWDVNAPKEAS) lie on the Extracellular side of the membrane. Residues 309–331 (AFIIAMLLASLNSCCNPWIYMLF) traverse the membrane as a helical segment. Residues 332–388 (TGHLFHELVQRFFCCSARYLKGSRPGETSVSKKSNSSTFVLSRRSSSQRSCSQPSSA) are Cytoplasmic-facing. The disordered stretch occupies residues 354-388 (SRPGETSVSKKSNSSTFVLSRRSSSQRSCSQPSSA). Residues S365 and S367 each carry the phosphoserine modification. Residues 365 to 388 (SNSSTFVLSRRSSSQRSCSQPSSA) show a composition bias toward low complexity.

This sequence belongs to the G-protein coupled receptor 1 family. Vasopressin/oxytocin receptor subfamily.

It is found in the cell membrane. Receptor for oxytocin. The activity of this receptor is mediated by G proteins which activate a phosphatidylinositol-calcium second messenger system. This chain is Oxytocin receptor (Oxtr), found in Rattus norvegicus (Rat).